The following is a 124-amino-acid chain: UPF0231 protein Shewmr7_3366 (124 aa).

Belongs to the UPF0231 family.

The protein is UPF0231 protein Shewmr7_3366 of Shewanella sp. (strain MR-7).